The chain runs to 166 residues: CDP-archaeol synthase (166 aa).

Helical transmembrane passes span 42-62 (FFGG…AATA), 73-93 (FLSV…KSFL), 104-124 (SWFL…ILIF), and 128-148 (WLFG…TPLL).

Belongs to the CDP-archaeol synthase family. The cofactor is Mg(2+).

It localises to the cell membrane. It catalyses the reaction 2,3-bis-O-(geranylgeranyl)-sn-glycerol 1-phosphate + CTP + H(+) = CDP-2,3-bis-O-(geranylgeranyl)-sn-glycerol + diphosphate. Its pathway is membrane lipid metabolism; glycerophospholipid metabolism. Its function is as follows. Catalyzes the formation of CDP-2,3-bis-(O-geranylgeranyl)-sn-glycerol (CDP-archaeol) from 2,3-bis-(O-geranylgeranyl)-sn-glycerol 1-phosphate (DGGGP) and CTP. This reaction is the third ether-bond-formation step in the biosynthesis of archaeal membrane lipids. The chain is CDP-archaeol synthase from Methanoculleus marisnigri (strain ATCC 35101 / DSM 1498 / JR1).